We begin with the raw amino-acid sequence, 2319 residues long: AT-rich interactive domain-containing protein 1B (2319 aa).

2 stretches are compositionally biased toward low complexity: residues 1 to 21 (MAARAAAAAAAAAARARARAG) and 43 to 56 (GARGAAAAAAAPGP). Disordered stretches follow at residues 1-74 (MAAR…VHHH), 155-306 (VGEA…GGGG), 321-414 (APAS…GAGA), 487-546 (RFAG…AGAA), 577-1062 (QQRS…LMNT), and 1085-1129 (DMMS…KITK). Ala2 bears the N-acetylalanine mark. Residues 57–68 (MLGGGGDGGGGL) are compositionally biased toward gly residues. Basic residues predominate over residues 165 to 188 (QQHHHHHHAHHHHHHAHHLHHHHA). Composition is skewed to low complexity over residues 189-215 (LQQQLNQFQQQQQQQQQQQQQQQQQQH) and 343-363 (SPGMGMMHSASAAAAGAPGSM). The segment covering 365–379 (PLQNSHEGYPNSQCN) has biased composition (polar residues). Residues 388–414 (GAGGGGGGGGGGGGGSGGGGGGGGAGA) show a composition bias toward gly residues. An Asymmetric dimethylarginine modification is found at Arg487. Positions 489 to 510 (AGQNQHPSGATPTLNQLLTSPS) are enriched in polar residues. An LXXLL motif is present at residues 502–506 (LNQLL). Over residues 536–546 (PQSQAAAAGAA) the composition is skewed to low complexity. A phosphoserine mark is found at Ser585 and Ser599. Arg608 carries the asymmetric dimethylarginine modification. A compositionally biased stretch (low complexity) spans 620–630 (SQPQQSSPYPG). Arg640 bears the Asymmetric dimethylarginine mark. Low complexity-rich tracts occupy residues 651–670 (GAMAGMQYPQQQMPPQYGQQ), 677–687 (QQGQQPYYSQQ), 695–712 (PQAQYLPSQSQQRYQPQQ), 767–783 (SSAVSASGSTSSQGDQS), 811–832 (GSPVGSNQSRSGPISPASIPGS), and 840–849 (GSQSESSSHP). The segment covering 866–880 (TQRNPQMAQYGPQQT) has biased composition (polar residues). The span at 881-892 (GPSMSPHPSPGG) shows a compositional bias: low complexity. Polar residues-rich tracts occupy residues 899-923 (SSFQQSNSSGTYGPQMSQYGPQGNY) and 947-958 (SANNQMHGQGPS). Composition is skewed to low complexity over residues 980–994 (PGNMSSMTPSSPGMS) and 1014–1028 (EAAAAVMQAAANSAQ). A compositionally biased stretch (polar residues) spans 1029-1062 (SRQGSFPGMNQSGLMASSSPYSQPMNNSSSLMNT). Residues 1136–1227 (EPERKLWVDR…YLFAFECKIE (92 aa)) form the ARID domain. Disordered regions lie at residues 1230 to 1334 (EEPP…QQGM), 1346 to 1443 (EPNK…PNYK), 1475 to 1647 (NQYG…FLPS), and 1782 to 1852 (DHNA…KQAS). Composition is skewed to polar residues over residues 1254–1273 (ANSGSLQGPQTPQSTGSNSM) and 1287–1304 (STPHGQMTPMQGGRSSTI). The segment covering 1305–1319 (SVHDPFSDVSDSSFP) has biased composition (low complexity). Polar residues-rich tracts occupy residues 1320 to 1334 (KRNSMTPNAPYQQGM) and 1364 to 1388 (PFMTQGQMPNSSMQDMYNQSPSGAM). The segment covering 1426–1440 (PPYGGHQPGLYPQQP) has biased composition (low complexity). A Nuclear localization signal motif is present at residues 1441 to 1460 (NYKRHMDGMYGPPAKRHEGD). 2 stretches are compositionally biased toward polar residues: residues 1522-1534 (LQSSSSEGPQQNM) and 1579-1601 (ESQWPSHVSQRQPYMSSSASMQP). Residues Ser1625, Ser1638, and Ser1642 each carry the phosphoserine modification. Polar residues predominate over residues 1627-1641 (ASFQRSLENRMSPSK). Residues 1782 to 1791 (DHNAARKDDS) show a composition bias toward basic and acidic residues. A Phosphoserine modification is found at Ser1798. Positions 1799-1823 (GKEEEDAECIDDDEEDEEDEEEDSE) are enriched in acidic residues. Positions 1842-1852 (ADPKEKPKQAS) are enriched in basic and acidic residues. Lys1860 carries the post-translational modification N6-acetyllysine. Disordered stretches follow at residues 1904-1941 (FESKMEIPPRRRPPPPLSSAGRKKEQEGKGDSEEQQEK) and 1954-1973 (RPGALPEDANPGPQTESSKF). Basic and acidic residues predominate over residues 1925-1940 (RKKEQEGKGDSEEQQE). The LXXLL motif lies at 2119–2123 (LDGLL).

Component of SWI/SNF chromatin remodeling complexes, in some of which it can be mutually exclusive with ARID1B/BAF250B. The canonical complex contains a catalytic subunit (either SMARCA4/BRG1/BAF190A or SMARCA2/BRM/BAF190B) and at least SMARCE1, ACTL6A/BAF53, SMARCC1/BAF155, SMARCC2/BAF170, and SMARCB1/SNF5/BAF47. Other subunits specific to each of the complexes may also be present permitting several possible combinations developmentally and tissue specific. Component of the BAF (SWI/SNF-A) complex, which includes at least actin (ACTB), ARID1A/BAF250A, ARID1B/BAF250B, SMARCA2/BRM, SMARCA4/BRG1/BAF190A, ACTL6A/BAF53, ACTL6B/BAF53B, SMARCE1/BAF57, SMARCC1/BAF155, SMARCC2/BAF170, SMARCB1/SNF5/INI1, and one or more SMARCD1/BAF60A, SMARCD2/BAF60B, or SMARCD3/BAF60C. In muscle cells, the BAF complex also contains DPF3. Component of neural progenitors-specific chromatin remodeling complex (npBAF complex) composed of at least, ARID1A/BAF250A or ARID1B/BAF250B, SMARCD1/BAF60A, SMARCD3/BAF60C, SMARCA2/BRM/BAF190B, SMARCA4/BRG1/BAF190A, SMARCB1/BAF47, SMARCC1/BAF155, SMARCE1/BAF57, SMARCC2/BAF170, PHF10/BAF45A, ACTL6A/BAF53A and actin. Component of neuron-specific chromatin remodeling complex (nBAF complex) composed of at least, ARID1A/BAF250A or ARID1B/BAF250B, SMARCD1/BAF60A, SMARCD3/BAF60C, SMARCA2/BRM/BAF190B, SMARCA4/BRG1/BAF190A, SMARCB1/BAF47, SMARCC1/BAF155, SMARCE1/BAF57, SMARCC2/BAF170, DPF1/BAF45B, DPF3/BAF45C, ACTL6B/BAF53B and actin. Component of a SWI/SNF-like EBAFb complex, at least composed of SMARCA4/BRG1/BAF190A, SMARCB1/BAF47/SNF5, ACTL6A/BAF53A, SMARCE1/BAF57, SMARCD1/BAF60A, SMARCD2/BAF60B, SMARCC1/BAF155, SMARCC2/BAF170, ARID1B/BAF250B, MLLT1/ENL and actin. Interacts through its C-terminus with SMARCA2/BRM/BAF190B and SMARCA4/BRG1/BAF190A. Interacts with SMARCC1/BAF155. In terms of tissue distribution, widely expressed with high levels in heart, skeletal muscle and kidney.

The protein resides in the nucleus. Involved in transcriptional activation and repression of select genes by chromatin remodeling (alteration of DNA-nucleosome topology). Component of SWI/SNF chromatin remodeling complexes that carry out key enzymatic activities, changing chromatin structure by altering DNA-histone contacts within a nucleosome in an ATP-dependent manner. Belongs to the neural progenitors-specific chromatin remodeling complex (npBAF complex) and the neuron-specific chromatin remodeling complex (nBAF complex). During neural development a switch from a stem/progenitor to a postmitotic chromatin remodeling mechanism occurs as neurons exit the cell cycle and become committed to their adult state. The transition from proliferating neural stem/progenitor cells to postmitotic neurons requires a switch in subunit composition of the npBAF and nBAF complexes. As neural progenitors exit mitosis and differentiate into neurons, npBAF complexes which contain ACTL6A/BAF53A and PHF10/BAF45A, are exchanged for homologous alternative ACTL6B/BAF53B and DPF1/BAF45B or DPF3/BAF45C subunits in neuron-specific complexes (nBAF). The npBAF complex is essential for the self-renewal/proliferative capacity of the multipotent neural stem cells. The nBAF complex along with CREST plays a role regulating the activity of genes essential for dendrite growth. Binds DNA non-specifically. This is AT-rich interactive domain-containing protein 1B from Homo sapiens (Human).